Reading from the N-terminus, the 212-residue chain is Acyl-homoserine-lactone synthase (212 aa).

This sequence belongs to the autoinducer synthase family.

It catalyses the reaction a fatty acyl-[ACP] + S-adenosyl-L-methionine = an N-acyl-L-homoserine lactone + S-methyl-5'-thioadenosine + holo-[ACP] + H(+). Required for the synthesis of OHHL (N-(3-oxohexanoyl)-L-homoserine lactone), an autoinducer molecule which binds to ExpR and thus acts in virulence (soft rot disease) through the activation of genes for plant tissue macerating enzymes. The sequence is that of Acyl-homoserine-lactone synthase (expI) from Dickeya dadantii (strain 3937) (Erwinia chrysanthemi (strain 3937)).